The sequence spans 243 residues: Ribosomal RNA small subunit methyltransferase G (243 aa).

S-adenosyl-L-methionine-binding positions include G79, F84, 130-131, and R150; that span reads AE. The disordered stretch occupies residues 219–243; the sequence is EKKKQTPNKYPRKPGTPGKDPIGKK.

The protein belongs to the methyltransferase superfamily. RNA methyltransferase RsmG family.

It is found in the cytoplasm. Its function is as follows. Specifically methylates the N7 position of a guanine in 16S rRNA. The chain is Ribosomal RNA small subunit methyltransferase G from Pediococcus pentosaceus (strain ATCC 25745 / CCUG 21536 / LMG 10740 / 183-1w).